The following is a 126-amino-acid chain: Penicillinase repressor (126 aa).

A DNA-binding region (H-T-H motif) is located at residues 7-71; it reads EISMAEWDVM…KSENIYFYSS (65 aa). Positions 74 to 126 are important for dimerization; that stretch reads KEDDIKMKTAKTFLNKLYGGDMKSLVLNFAKNEELNNKEIEELRDILNDISKK.

Belongs to the BlaI transcriptional regulatory family. As to quaternary structure, homodimer. Upon exposure to beta-lactams, the protease BlaR1 is activated and cleaves BlaI at a single site. This proteolytic cleavage impairs dimerization and abolishes repressor activity.

Its subcellular location is the cytoplasm. Transcriptional repressor that constitutively blocks expression of beta-lactamase. Binds DNA as a dimer. The chain is Penicillinase repressor (blaI) from Staphylococcus aureus.